Consider the following 210-residue polypeptide: Large ribosomal subunit protein uL4 (210 aa).

The segment covering 41 to 52 (QTNARQGTASTK) has biased composition (polar residues). A disordered region spans residues 41 to 71 (QTNARQGTASTKTRAEVRGGGRKPWRQKGTG). Positions 60-71 (GGRKPWRQKGTG) are enriched in basic residues.

This sequence belongs to the universal ribosomal protein uL4 family. As to quaternary structure, part of the 50S ribosomal subunit.

Its function is as follows. One of the primary rRNA binding proteins, this protein initially binds near the 5'-end of the 23S rRNA. It is important during the early stages of 50S assembly. It makes multiple contacts with different domains of the 23S rRNA in the assembled 50S subunit and ribosome. Forms part of the polypeptide exit tunnel. The sequence is that of Large ribosomal subunit protein uL4 from Trichormus variabilis (strain ATCC 29413 / PCC 7937) (Anabaena variabilis).